The sequence spans 163 residues: Putative MucR family transcriptional regulatory protein RA0938 (163 aa).

The protein belongs to the ros/MucR family.

The polypeptide is Putative MucR family transcriptional regulatory protein RA0938 (Rhizobium meliloti (strain 1021) (Ensifer meliloti)).